Here is a 146-residue protein sequence, read N- to C-terminus: UPF0260 protein SO_2573 (146 aa).

It belongs to the UPF0260 family.

The chain is UPF0260 protein SO_2573 from Shewanella oneidensis (strain ATCC 700550 / JCM 31522 / CIP 106686 / LMG 19005 / NCIMB 14063 / MR-1).